An 89-amino-acid polypeptide reads, in one-letter code: Small ribosomal subunit protein uS15 (89 aa).

Belongs to the universal ribosomal protein uS15 family. In terms of assembly, part of the 30S ribosomal subunit. Forms a bridge to the 50S subunit in the 70S ribosome, contacting the 23S rRNA.

Functionally, one of the primary rRNA binding proteins, it binds directly to 16S rRNA where it helps nucleate assembly of the platform of the 30S subunit by binding and bridging several RNA helices of the 16S rRNA. Its function is as follows. Forms an intersubunit bridge (bridge B4) with the 23S rRNA of the 50S subunit in the ribosome. This Haemophilus influenzae (strain PittGG) protein is Small ribosomal subunit protein uS15.